Reading from the N-terminus, the 100-residue chain is Aspartyl/glutamyl-tRNA(Asn/Gln) amidotransferase subunit C (100 aa).

The protein belongs to the GatC family. As to quaternary structure, heterotrimer of A, B and C subunits.

It carries out the reaction L-glutamyl-tRNA(Gln) + L-glutamine + ATP + H2O = L-glutaminyl-tRNA(Gln) + L-glutamate + ADP + phosphate + H(+). It catalyses the reaction L-aspartyl-tRNA(Asn) + L-glutamine + ATP + H2O = L-asparaginyl-tRNA(Asn) + L-glutamate + ADP + phosphate + 2 H(+). Allows the formation of correctly charged Asn-tRNA(Asn) or Gln-tRNA(Gln) through the transamidation of misacylated Asp-tRNA(Asn) or Glu-tRNA(Gln) in organisms which lack either or both of asparaginyl-tRNA or glutaminyl-tRNA synthetases. The reaction takes place in the presence of glutamine and ATP through an activated phospho-Asp-tRNA(Asn) or phospho-Glu-tRNA(Gln). The chain is Aspartyl/glutamyl-tRNA(Asn/Gln) amidotransferase subunit C from Corynebacterium aurimucosum (strain ATCC 700975 / DSM 44827 / CIP 107346 / CN-1) (Corynebacterium nigricans).